Here is a 334-residue protein sequence, read N- to C-terminus: MRVLASAPAKIILFGEHSVVYGKPAIAAAIDLRTYVWAEFNNKGAIKIEAKDIKVPGLTVSFSEDEIYFESDYGKAAEVLSYVRQAIELVREEADKNGNGVTVSITSQIPVGAGLGSSAAVAVATIGAVSRLLGLELSNEEIAKLGHKVELLVQGASSGIDPTVSAIGGFLHYEKGNFEHLPFMELPIVVGYTGSSGSTKELVAMVRRNYEEMPEVIEPILVSMGKIVEKAKDVLLSELDNEVRFVQLGRLMNINHGLLDALGVSTKKLSELVYAARTAGALGAKITGAGGGGCMYALAPEKQSEVATAITIAGGTPMITKISDEGLRIEEVLP.

Residue 110-120 (PVGAGLGSSAA) coordinates ATP. Catalysis depends on D161, which acts as the Proton acceptor.

It belongs to the GHMP kinase family. Mevalonate kinase subfamily. In terms of assembly, homodimer. It depends on Mg(2+) as a cofactor.

The protein localises to the cytoplasm. It catalyses the reaction (R)-mevalonate + ATP = (R)-5-phosphomevalonate + ADP + H(+). The protein operates within isoprenoid biosynthesis; isopentenyl diphosphate biosynthesis via mevalonate pathway; isopentenyl diphosphate from (R)-mevalonate: step 1/3. Functionally, catalyzes the phosphorylation of (R)-mevalonate (MVA) to (R)-mevalonate 5-phosphate (MVAP). Functions in the mevalonate (MVA) pathway leading to isopentenyl diphosphate (IPP), a key precursor for the biosynthesis of isoprenoid compounds such as archaeal membrane lipids. The chain is Mevalonate kinase from Thermococcus onnurineus (strain NA1).